A 434-amino-acid chain; its full sequence is Gamma-enolase (434 aa).

S2 is modified (N-acetylserine). The residue at position 5 (K5) is an N6-acetyllysine. Residue T26 is modified to Phosphothreonine. S40 serves as a coordination point for Mg(2+). Phosphotyrosine is present on Y44. K60 carries the N6-acetyllysine; alternate modification. K60 bears the N6-succinyllysine; alternate mark. Position 64 is an N6-acetyllysine (K64). K89 carries the N6-acetyllysine; alternate modification. N6-succinyllysine; alternate is present on K89. Residues H158 and E167 each contribute to the substrate site. N6-acetyllysine is present on residues K193, K197, and K199. Position 202 is an N6-acetyllysine; alternate (K202). K202 participates in a covalent cross-link: Glycyl lysine isopeptide (Lys-Gly) (interchain with G-Cter in SUMO2); alternate. E210 functions as the Proton donor in the catalytic mechanism. N6-acetyllysine; alternate occurs at positions 228 and 233. Position 228 is an N6-succinyllysine; alternate (K228). Residue K233 is modified to N6-(2-hydroxyisobutyryl)lysine; alternate. D245 lines the Mg(2+) pocket. K256 is subject to N6-acetyllysine. S263 carries the post-translational modification Phosphoserine. Phosphotyrosine is present on Y287. At S291 the chain carries Phosphoserine. The Mg(2+) site is built by E293 and D318. Substrate-binding residues include E293 and D318. K335 and K343 each carry N6-acetyllysine. The active-site Proton acceptor is K343. Substrate contacts are provided by residues 370 to 373 and K394; that span reads SHRS. K406 bears the N6-acetyllysine mark.

The protein belongs to the enolase family. As to quaternary structure, mammalian enolase is composed of 3 isozyme subunits, alpha, beta and gamma, which can form homodimers or heterodimers which are cell-type and development-specific. The cofactor is Mg(2+). In terms of tissue distribution, skeletal muscle (at protein level). The alpha/alpha homodimer is expressed in embryo and in most adult tissues. The alpha/beta heterodimer and the beta/beta homodimer are found in striated muscle, and the alpha/gamma heterodimer and the gamma/gamma homodimer in neurons.

The protein resides in the cytoplasm. It localises to the cell membrane. It catalyses the reaction (2R)-2-phosphoglycerate = phosphoenolpyruvate + H2O. It functions in the pathway carbohydrate degradation; glycolysis; pyruvate from D-glyceraldehyde 3-phosphate: step 4/5. In terms of biological role, has neurotrophic and neuroprotective properties on a broad spectrum of central nervous system (CNS) neurons. Binds, in a calcium-dependent manner, to cultured neocortical neurons and promotes cell survival. The chain is Gamma-enolase (Eno2) from Mus musculus (Mouse).